A 960-amino-acid chain; its full sequence is MMRFHKACHRFSLSPLCHLSPPSPSPASSLLLLPKLSGFSTLSTRRCVRVRRFSENPLTTVMASRSASRLRSLASACSGGAEDGGGTSNGSLSASATATEDDELAIGTGYRLPPPEIRDIVDAPPVPALSFSPHRDKILFLKRRALPPLADLARPEEKLAGVRIDGYCNTRSRMSFYTGLGIHQLLPDGTLSPEKEITGIPDGGKINFVTWSNDGKHLAFSIRVDENGNSSKPVVWVADVETGVARPLFNSQDIFLNAIFESFVWIDNSTLLVSTIPSSRGEPPKKPLVPSGPKTLSNETKTVVQVRTFQDLLKDEYDADLFDYYASSQLVLASLDGTVKEVGVPAVYTSLDPSTDHKYLLVSSLHRPYSFIVPCGRFPKKVEVWTTDGRFVRQLCDLPLAEDIPIASNSVRKGMRSINWRADKPSTLWAETQDGGDAKMEVSPRDIVYMQSAEPLAGEEPEVLHKLDLRYGGISWCDDTLALVYESWYKTRRTRTWVISPGSNDVSPRILFDRSSEDVYSDPGSTMLRRTDAGTYVIAKIKKENDEGTYVLLNGSGATPQGNVPFLDLFDINTGNKERIWESDKEKYFETVVALMSDQKEGDLKMEELKILTSKESKTENTQYSLQLWPDRKVQQITNFPHPYPQLASLQKEMIRYQRKDGVQLTATLYLPPGYDPSKDGPLPCLFWSYPGEFKSKDAAGQVRGSPNEFAGIGSTSALLWLARRFAILSGPTIPIIGEGDEEANDRYVEQLVASAEAAVEEVVRRGVADRSKIAVGGHSYGAFMTANLLAHAPHLFACGIARSGAYNRTLTPFGFQNEDRTLWEATNVYVEMSPFMSANKIKKPILLIHGEEDNNPGTLTMQSDRFFNALKGHGALCRLVVLPHESHGYSARESIMHVLWETDRWLQKYCVPNTSDADTSPDQSKEGSDSADKVSTGTGGGNPEFGEHEVHSKLRRSLL.

Residues 1–62 (MMRFHKACHR…FSENPLTTVM (62 aa)) constitute a chloroplast transit peptide. Residues 78 to 98 (SGGAEDGGGTSNGSLSASATA) form a disordered region. Over residues 89–98 (NGSLSASATA) the composition is skewed to polar residues. Active-site charge relay system residues include Ser780, Asp854, and His888. A disordered region spans residues 915–960 (TSDADTSPDQSKEGSDSADKVSTGTGGGNPEFGEHEVHSKLRRSLL). Basic and acidic residues predominate over residues 924–933 (QSKEGSDSAD).

It belongs to the peptidase S9D family.

The protein localises to the plastid. It is found in the chloroplast stroma. In terms of biological role, serine-type protease active in vitro against the LHCII N-terminal. Cleaves its substrate on the carboxy-side of Glu residues. The sequence is that of Probable glutamyl endopeptidase, chloroplastic (GEP) from Arabidopsis thaliana (Mouse-ear cress).